The primary structure comprises 312 residues: DNA-directed RNA polymerase subunit alpha (312 aa).

Residues 1–226 (MIEFEKPNIT…EHLDLFTDLT (226 aa)) form an alpha N-terminal domain (alpha-NTD) region. Positions 244–312 (DHVLERTIEE…DLGLGLKNDK (69 aa)) are alpha C-terminal domain (alpha-CTD).

Belongs to the RNA polymerase alpha chain family. Homodimer. The RNAP catalytic core consists of 2 alpha, 1 beta, 1 beta' and 1 omega subunit. When a sigma factor is associated with the core the holoenzyme is formed, which can initiate transcription.

The enzyme catalyses RNA(n) + a ribonucleoside 5'-triphosphate = RNA(n+1) + diphosphate. Its function is as follows. DNA-dependent RNA polymerase catalyzes the transcription of DNA into RNA using the four ribonucleoside triphosphates as substrates. The sequence is that of DNA-directed RNA polymerase subunit alpha from Streptococcus gordonii (strain Challis / ATCC 35105 / BCRC 15272 / CH1 / DL1 / V288).